A 1119-amino-acid chain; its full sequence is Isoleucine--tRNA ligase (1119 aa).

Residues 1–43 (MVPRRSRQRPASSCRTAKTARREMPYPLPAPDGQEPEAQPVTP) are disordered. The 'HIGH' region motif lies at 84–94 (PFANGLPHYGH). The short motif at 676–680 (KVSKS) is the 'KMSKS' region element. Residue K679 participates in ATP binding.

It belongs to the class-I aminoacyl-tRNA synthetase family. IleS type 2 subfamily. Monomer. Requires Zn(2+) as cofactor.

The protein resides in the cytoplasm. It catalyses the reaction tRNA(Ile) + L-isoleucine + ATP = L-isoleucyl-tRNA(Ile) + AMP + diphosphate. Functionally, catalyzes the attachment of isoleucine to tRNA(Ile). As IleRS can inadvertently accommodate and process structurally similar amino acids such as valine, to avoid such errors it has two additional distinct tRNA(Ile)-dependent editing activities. One activity is designated as 'pretransfer' editing and involves the hydrolysis of activated Val-AMP. The other activity is designated 'posttransfer' editing and involves deacylation of mischarged Val-tRNA(Ile). This is Isoleucine--tRNA ligase from Leifsonia xyli subsp. xyli (strain CTCB07).